The sequence spans 104 residues: Large ribosomal subunit protein bL21 (104 aa).

Belongs to the bacterial ribosomal protein bL21 family. Part of the 50S ribosomal subunit. Contacts protein L20.

Functionally, this protein binds to 23S rRNA in the presence of protein L20. This is Large ribosomal subunit protein bL21 from Helicobacter hepaticus (strain ATCC 51449 / 3B1).